The sequence spans 88 residues: MSDRPFTLADLQRILVEAAGADESAGPDDILDTTFALLGYESLALLETGGCIEREIGISLDDDTLTDALTPRELIDHVNERLAAARVA.

The Carrier domain maps to 5–82 (PFTLADLQRI…ELIDHVNERL (78 aa)). Ser42 is modified (O-(pantetheine 4'-phosphoryl)serine).

4'-phosphopantetheine is transferred from CoA to a specific serine of the apo-ACP-like protein.

It participates in antifungal biosynthesis; monensin biosynthesis. Its function is as follows. Acyl carrier protein. This chain is Monensin polyketide synthase acyl carrier protein, found in Streptomyces virginiae (Streptomyces cinnamonensis).